We begin with the raw amino-acid sequence, 64 residues long: MPKMKTNKGAAKRFKKTAGGIKYKHATKRHILTKRTTKNKRQLRPNSILPKCEVAGVMRMLPYA.

The protein belongs to the bacterial ribosomal protein bL35 family.

This chain is Large ribosomal subunit protein bL35, found in Vibrio metschnikovii.